The primary structure comprises 373 residues: 4-hydroxy-3-methylbut-2-en-1-yl diphosphate synthase (flavodoxin) (373 aa).

Residues Cys-270, Cys-273, Cys-305, and Glu-312 each contribute to the [4Fe-4S] cluster site.

It belongs to the IspG family. [4Fe-4S] cluster serves as cofactor.

The enzyme catalyses (2E)-4-hydroxy-3-methylbut-2-enyl diphosphate + oxidized [flavodoxin] + H2O + 2 H(+) = 2-C-methyl-D-erythritol 2,4-cyclic diphosphate + reduced [flavodoxin]. It functions in the pathway isoprenoid biosynthesis; isopentenyl diphosphate biosynthesis via DXP pathway; isopentenyl diphosphate from 1-deoxy-D-xylulose 5-phosphate: step 5/6. Converts 2C-methyl-D-erythritol 2,4-cyclodiphosphate (ME-2,4cPP) into 1-hydroxy-2-methyl-2-(E)-butenyl 4-diphosphate. The protein is 4-hydroxy-3-methylbut-2-en-1-yl diphosphate synthase (flavodoxin) of Pectobacterium atrosepticum (strain SCRI 1043 / ATCC BAA-672) (Erwinia carotovora subsp. atroseptica).